A 266-amino-acid polypeptide reads, in one-letter code: Protein-ADP-ribose hydrolase (266 aa).

The 192-residue stretch at 74–265 (TDLKDLKPIK…LYKEAFNRDA (192 aa)) folds into the Macro domain. ADP-D-ribose-binding residues include Asp93, Ile94, and Asn107. The Zn(2+) site is built by Cys113, His118, and Cys120. Residues Cys120, Ile121, Asp122, Ser212, Thr213, Gly214, and Phe216 each contribute to the ADP-D-ribose site.

It belongs to the MacroD-type family. Zn-Macro subfamily. The cofactor is Zn(2+).

It carries out the reaction 4-O-(ADP-D-ribosyl)-L-aspartyl-[protein] + H2O = L-aspartyl-[protein] + ADP-D-ribose + H(+). In terms of biological role, ADP-ribosylhydrolase that specifically reverses the SirTM-mediated mono-ADP-ribosylation at an asparatate residue of GcvH-L, by releasing ADP-ribose from the target protein. May play a role in the regulation of the response to host-induced oxidative stress. The sequence is that of Protein-ADP-ribose hydrolase from Staphylococcus aureus (strain MRSA252).